A 526-amino-acid chain; its full sequence is Putative D-lactate dehydrogenase C713.03, mitochondrial (526 aa).

One can recognise an FAD-binding PCMH-type domain in the interval 93 to 272; the sequence is YRGKTQLALK…TKLSVICPKR (180 aa).

It belongs to the FAD-binding oxidoreductase/transferase type 4 family. FAD is required as a cofactor.

It localises to the mitochondrion matrix. The catalysed reaction is (R)-lactate + 2 Fe(III)-[cytochrome c] = 2 Fe(II)-[cytochrome c] + pyruvate + 2 H(+). In Schizosaccharomyces pombe (strain 972 / ATCC 24843) (Fission yeast), this protein is Putative D-lactate dehydrogenase C713.03, mitochondrial.